The primary structure comprises 960 residues: Isoleucine--tRNA ligase (960 aa).

The short motif at 82 to 92 (PYANGHIHIGH) is the 'HIGH' region element. Residue glutamate 606 participates in L-isoleucyl-5'-AMP binding. Positions 647-651 (KMSKS) match the 'KMSKS' region motif. Lysine 650 is an ATP binding site. Positions 931, 934, 951, and 954 each coordinate Zn(2+).

Belongs to the class-I aminoacyl-tRNA synthetase family. IleS type 1 subfamily. In terms of assembly, monomer. Zn(2+) is required as a cofactor.

The protein localises to the cytoplasm. The catalysed reaction is tRNA(Ile) + L-isoleucine + ATP = L-isoleucyl-tRNA(Ile) + AMP + diphosphate. Catalyzes the attachment of isoleucine to tRNA(Ile). As IleRS can inadvertently accommodate and process structurally similar amino acids such as valine, to avoid such errors it has two additional distinct tRNA(Ile)-dependent editing activities. One activity is designated as 'pretransfer' editing and involves the hydrolysis of activated Val-AMP. The other activity is designated 'posttransfer' editing and involves deacylation of mischarged Val-tRNA(Ile). In Gluconobacter oxydans (strain 621H) (Gluconobacter suboxydans), this protein is Isoleucine--tRNA ligase.